The following is a 518-amino-acid chain: Arrestin-related trafficking adapter 10 (518 aa).

Residue Lys118 forms a Glycyl lysine isopeptide (Lys-Gly) (interchain with G-Cter in ubiquitin) linkage.

The protein belongs to the ART10 family. In terms of assembly, interacts with RSP5. Post-translationally, ubiquitinated by RSP5.

It is found in the cytoplasm. May regulate endocytosis by recruiting RSP5 ubiquitin ligase activity to specific plasma membrane proteins in response to extracellular stimuli. The chain is Arrestin-related trafficking adapter 10 (ART10) from Saccharomyces cerevisiae (strain YJM789) (Baker's yeast).